A 143-amino-acid chain; its full sequence is Large ribosomal subunit protein uL11 (143 aa).

Belongs to the universal ribosomal protein uL11 family. As to quaternary structure, part of the ribosomal stalk of the 50S ribosomal subunit. Interacts with L10 and the large rRNA to form the base of the stalk. L10 forms an elongated spine to which L12 dimers bind in a sequential fashion forming a multimeric L10(L12)X complex. Post-translationally, one or more lysine residues are methylated.

Its function is as follows. Forms part of the ribosomal stalk which helps the ribosome interact with GTP-bound translation factors. The polypeptide is Large ribosomal subunit protein uL11 (Pseudomonas paraeruginosa (strain DSM 24068 / PA7) (Pseudomonas aeruginosa (strain PA7))).